We begin with the raw amino-acid sequence, 351 residues long: Histidinol-phosphate aminotransferase 1 (351 aa).

At K210 the chain carries N6-(pyridoxal phosphate)lysine.

It belongs to the class-II pyridoxal-phosphate-dependent aminotransferase family. Histidinol-phosphate aminotransferase subfamily. Homodimer. Pyridoxal 5'-phosphate serves as cofactor.

The enzyme catalyses L-histidinol phosphate + 2-oxoglutarate = 3-(imidazol-4-yl)-2-oxopropyl phosphate + L-glutamate. It functions in the pathway amino-acid biosynthesis; L-histidine biosynthesis; L-histidine from 5-phospho-alpha-D-ribose 1-diphosphate: step 7/9. The protein is Histidinol-phosphate aminotransferase 1 (hisC1) of Pseudomonas aeruginosa (strain ATCC 15692 / DSM 22644 / CIP 104116 / JCM 14847 / LMG 12228 / 1C / PRS 101 / PAO1).